Here is a 329-residue protein sequence, read N- to C-terminus: Ankyrin repeat and SOCS box protein 5 (329 aa).

ANK repeat units lie at residues 69–98, 102–131, 135–164, 167–196, 200–229, and 232–261; these read ADRS…NVNA, DHVT…NVNA, DGVT…KAQL, CLPS…DVDQ, HLGT…DVQK, and YWDT…DINA. The SOCS box domain occupies 278–329; the sequence is MVERILLQHEATPSSLYQLCRLCIRSYIGKPRLHLIPQLQLPTLLKNFLQYR.

Belongs to the ankyrin SOCS box (ASB) family.

It participates in protein modification; protein ubiquitination. In terms of biological role, may be a substrate-recognition component of a SCF-like ECS (Elongin-Cullin-SOCS-box protein) E3 ubiquitin-protein ligase complex which mediates the ubiquitination and subsequent proteasomal degradation of target proteins. May play a role in the initiation of arteriogenesis. This is Ankyrin repeat and SOCS box protein 5 (ASB5) from Homo sapiens (Human).